A 263-amino-acid polypeptide reads, in one-letter code: 7beta-hydroxysteroid dehydrogenase (263 aa).

Residues 17–21, 40–41, and 66–67 contribute to the NADP(+) site; these read TEGVG, RR, and DF. Tyr-156 serves as the catalytic Proton acceptor. Ser-240 serves as a coordination point for NADP(+).

This sequence belongs to the short-chain dehydrogenases/reductases (SDR) family. Homodimer.

The catalysed reaction is a 7beta-hydroxysteroid + NADP(+) = a 7-oxosteroid + NADPH + H(+). The enzyme catalyses 7-oxolithocholate + NADPH + H(+) = ursodeoxycholate + NADP(+). It catalyses the reaction 7beta-hydroxy-3,12-dioxo-5beta-cholan-24-oate + NADP(+) = dehydrocholate + NADPH + H(+). It carries out the reaction ursocholate + NADP(+) = 3alpha,12alpha-dihydroxy-7-oxo-5beta-cholanate + NADPH + H(+). 7beta-hydroxysteroid dehydrogenase that catalyzes the reduction of the 7-oxo group of 7-oxo-lithocholate (7-oxo-LCA), to yield ursodeoxycholate (UDCA). As C.aerofaciens is an intestinal bacterium, this enzyme probably contributes to the formation of UDCA in the human colon. UDCA is regarded as a chemopreventive beneficial secondary bile acid due to its low hydrophobicity; it protects hepatocytes and bile duct epithelial cells against necrosis and apoptosis induced by more hydrophobic secondary bile acids like deoxycholate (DCA). This enzyme is also able to catalyze the reverse reaction, i.e. the oxidation of the 7beta-hydroxy group of UDCA to 7-oxo-LCA. To a lesser extent, is also active on the taurine- and glycine-conjugates of ursodeoxycholate. It is specific for NADPH/NADP(+) as the electron acceptor/donor since it is not active with NADH/NAD(+). In the presence of NADPH, 7beta-HSDH can also reduce dehydrocholate. And is also able to oxidize ursocholate. This Collinsella aerofaciens (strain ATCC 25986 / DSM 3979 / JCM 10188 / KCTC 3647 / NCTC 11838 / VPI 1003) protein is 7beta-hydroxysteroid dehydrogenase.